Consider the following 397-residue polypeptide: Protein irld-34 (397 aa).

This chain is Protein irld-34, found in Caenorhabditis elegans.